The chain runs to 261 residues: Small ribosomal subunit protein uS2 (261 aa).

Ser2 is subject to N-acetylserine. The disordered stretch occupies residues 214 to 261 (ATEDIKTDDVEEAPAADAETEWTGETEEVDWAESGATPAAEEAAASNW). Residues 222–244 (DVEEAPAADAETEWTGETEEVDW) are compositionally biased toward acidic residues. Residues 245 to 261 (AESGATPAAEEAAASNW) are compositionally biased toward low complexity.

This sequence belongs to the universal ribosomal protein uS2 family. As to quaternary structure, component of the small ribosomal subunit. Mature ribosomes consist of a small (40S) and a large (60S) subunit. The 40S subunit contains about 33 different proteins and 1 molecule of RNA (18S). The 60S subunit contains about 49 different proteins and 3 molecules of RNA (25S, 5.8S and 5S). Interacts with RPS21.

Its subcellular location is the cytoplasm. Functionally, required for the assembly and/or stability of the 40S ribosomal subunit. Required for the processing of the 20S rRNA-precursor to mature 18S rRNA in a late step of the maturation of 40S ribosomal subunits. This Debaryomyces hansenii (strain ATCC 36239 / CBS 767 / BCRC 21394 / JCM 1990 / NBRC 0083 / IGC 2968) (Yeast) protein is Small ribosomal subunit protein uS2.